Reading from the N-terminus, the 117-residue chain is Large ribosomal subunit protein bL20 (117 aa).

It belongs to the bacterial ribosomal protein bL20 family.

Binds directly to 23S ribosomal RNA and is necessary for the in vitro assembly process of the 50S ribosomal subunit. It is not involved in the protein synthesizing functions of that subunit. In Marinobacter nauticus (strain ATCC 700491 / DSM 11845 / VT8) (Marinobacter aquaeolei), this protein is Large ribosomal subunit protein bL20.